Consider the following 152-residue polypeptide: Urease accessory protein UreE (152 aa).

It belongs to the UreE family.

It is found in the cytoplasm. In terms of biological role, involved in urease metallocenter assembly. Binds nickel. Probably functions as a nickel donor during metallocenter assembly. This Enterobacter sp. (strain 638) protein is Urease accessory protein UreE.